The following is a 457-amino-acid chain: DNA repair protein RadA (457 aa).

The segment at Cys10–Cys27 adopts a C4-type zinc-finger fold. Gly97–Ser104 serves as a coordination point for ATP. The short motif at Lys254–Gly258 is the RadA KNRFG motif element. The tract at residues Asp353–Arg457 is lon-protease-like.

This sequence belongs to the RecA family. RadA subfamily.

DNA-dependent ATPase involved in processing of recombination intermediates, plays a role in repairing DNA breaks. Stimulates the branch migration of RecA-mediated strand transfer reactions, allowing the 3' invading strand to extend heteroduplex DNA faster. Binds ssDNA in the presence of ADP but not other nucleotides, has ATPase activity that is stimulated by ssDNA and various branched DNA structures, but inhibited by SSB. Does not have RecA's homology-searching function. In Halalkalibacterium halodurans (strain ATCC BAA-125 / DSM 18197 / FERM 7344 / JCM 9153 / C-125) (Bacillus halodurans), this protein is DNA repair protein RadA.